A 338-amino-acid chain; its full sequence is Phenylalanine--tRNA ligase alpha subunit (338 aa).

Glu-253 contacts Mg(2+).

This sequence belongs to the class-II aminoacyl-tRNA synthetase family. Phe-tRNA synthetase alpha subunit type 1 subfamily. In terms of assembly, tetramer of two alpha and two beta subunits. Mg(2+) serves as cofactor.

The protein localises to the cytoplasm. It catalyses the reaction tRNA(Phe) + L-phenylalanine + ATP = L-phenylalanyl-tRNA(Phe) + AMP + diphosphate + H(+). The polypeptide is Phenylalanine--tRNA ligase alpha subunit (Geobacter metallireducens (strain ATCC 53774 / DSM 7210 / GS-15)).